A 208-amino-acid chain; its full sequence is Small ribosomal subunit protein uS4 (208 aa).

In terms of domain architecture, S4 RNA-binding spans 98-163; that stretch reads RRLDNVVYRL…KPRFIEIKEK (66 aa).

This sequence belongs to the universal ribosomal protein uS4 family. As to quaternary structure, part of the 30S ribosomal subunit. Contacts protein S5. The interaction surface between S4 and S5 is involved in control of translational fidelity.

One of the primary rRNA binding proteins, it binds directly to 16S rRNA where it nucleates assembly of the body of the 30S subunit. Its function is as follows. With S5 and S12 plays an important role in translational accuracy. The sequence is that of Small ribosomal subunit protein uS4 from Caldicellulosiruptor saccharolyticus (strain ATCC 43494 / DSM 8903 / Tp8T 6331).